Here is a 108-residue protein sequence, read N- to C-terminus: Small ribosomal subunit protein eS25A (108 aa).

The span at 1–20 shows a compositional bias: low complexity; it reads MPPKQQLSKAAKAAAALAGG. The tract at residues 1–30 is disordered; sequence MPPKQQLSKAAKAAAALAGGKKSKKKWSKK. Residue Pro2 is modified to N,N-dimethylproline; by NTM1. Basic residues predominate over residues 21–30; it reads KKSKKKWSKK.

Belongs to the eukaryotic ribosomal protein eS25 family. As to quaternary structure, component of the small ribosomal subunit (SSU). Mature yeast ribosomes consist of a small (40S) and a large (60S) subunit. The 40S small subunit contains 1 molecule of ribosomal RNA (18S rRNA) and 33 different proteins (encoded by 57 genes). The large 60S subunit contains 3 rRNA molecules (25S, 5.8S and 5S rRNA) and 46 different proteins (encoded by 81 genes).

Its subcellular location is the cytoplasm. Its function is as follows. Component of the ribosome, a large ribonucleoprotein complex responsible for the synthesis of proteins in the cell. The small ribosomal subunit (SSU) binds messenger RNAs (mRNAs) and translates the encoded message by selecting cognate aminoacyl-transfer RNA (tRNA) molecules. The large subunit (LSU) contains the ribosomal catalytic site termed the peptidyl transferase center (PTC), which catalyzes the formation of peptide bonds, thereby polymerizing the amino acids delivered by tRNAs into a polypeptide chain. The nascent polypeptides leave the ribosome through a tunnel in the LSU and interact with protein factors that function in enzymatic processing, targeting, and the membrane insertion of nascent chains at the exit of the ribosomal tunnel. This is Small ribosomal subunit protein eS25A from Saccharomyces cerevisiae (strain ATCC 204508 / S288c) (Baker's yeast).